A 273-amino-acid chain; its full sequence is Large ribosomal subunit protein uL2 (273 aa).

Disordered regions lie at residues 28-53 and 221-273; these read KPFA…TTRH and RGTA…RRSK. A compositionally biased stretch (low complexity) spans 39–48; the sequence is KSGGRNNNGR.

Belongs to the universal ribosomal protein uL2 family. In terms of assembly, part of the 50S ribosomal subunit. Forms a bridge to the 30S subunit in the 70S ribosome.

Functionally, one of the primary rRNA binding proteins. Required for association of the 30S and 50S subunits to form the 70S ribosome, for tRNA binding and peptide bond formation. It has been suggested to have peptidyltransferase activity; this is somewhat controversial. Makes several contacts with the 16S rRNA in the 70S ribosome. The sequence is that of Large ribosomal subunit protein uL2 from Klebsiella pneumoniae (strain 342).